A 313-amino-acid chain; its full sequence is 3'-5' exoribonuclease YhaM (313 aa).

Residues 22 to 90 (SSVKGTASNG…QLKIRQIRQA (69 aa)) constitute a DNA-binding region (OB). The region spanning 163 to 279 (HVVSMLRLAK…LHQIDLMDAS (117 aa)) is the HD domain.

This sequence belongs to the YhaM family.

Its function is as follows. Shows a 3'-5' exoribonuclease activity. This is 3'-5' exoribonuclease YhaM from Listeria monocytogenes serovar 1/2a (strain ATCC BAA-679 / EGD-e).